Consider the following 743-residue polypeptide: Phosphoribosylformylglycinamidine synthase subunit PurL (743 aa).

Residue His53 is part of the active site. Residues Tyr56 and Lys95 each coordinate ATP. Glu97 is a binding site for Mg(2+). Substrate contacts are provided by residues 98-101 and Arg120; that span reads SHNH. The active-site Proton acceptor is His99. Asp121 is a binding site for Mg(2+). Gln245 contacts substrate. Asp275 lines the Mg(2+) pocket. Residue 319–321 participates in substrate binding; that stretch reads ESQ. ATP-binding residues include Asp502 and Gly539. Asn540 is a Mg(2+) binding site. Ser542 contributes to the substrate binding site.

Belongs to the FGAMS family. As to quaternary structure, monomer. Part of the FGAM synthase complex composed of 1 PurL, 1 PurQ and 2 PurS subunits.

It localises to the cytoplasm. It carries out the reaction N(2)-formyl-N(1)-(5-phospho-beta-D-ribosyl)glycinamide + L-glutamine + ATP + H2O = 2-formamido-N(1)-(5-O-phospho-beta-D-ribosyl)acetamidine + L-glutamate + ADP + phosphate + H(+). Its pathway is purine metabolism; IMP biosynthesis via de novo pathway; 5-amino-1-(5-phospho-D-ribosyl)imidazole from N(2)-formyl-N(1)-(5-phospho-D-ribosyl)glycinamide: step 1/2. Its function is as follows. Part of the phosphoribosylformylglycinamidine synthase complex involved in the purines biosynthetic pathway. Catalyzes the ATP-dependent conversion of formylglycinamide ribonucleotide (FGAR) and glutamine to yield formylglycinamidine ribonucleotide (FGAM) and glutamate. The FGAM synthase complex is composed of three subunits. PurQ produces an ammonia molecule by converting glutamine to glutamate. PurL transfers the ammonia molecule to FGAR to form FGAM in an ATP-dependent manner. PurS interacts with PurQ and PurL and is thought to assist in the transfer of the ammonia molecule from PurQ to PurL. The protein is Phosphoribosylformylglycinamidine synthase subunit PurL of Lactobacillus helveticus (strain DPC 4571).